The primary structure comprises 145 residues: uncharacterized protein (145 aa).

To B.subtilis XkdJ.

This is an uncharacterized protein from Bacillus subtilis (strain 168).